A 719-amino-acid chain; its full sequence is Phenylalanine--tRNA ligase beta subunit, chloroplastic (719 aa).

In terms of domain architecture, B5 spans 318-403 (DHALNINLSI…RIYGYHKFRS (86 aa)). Residues Asp381, Asp387, Glu390, and Glu391 each coordinate Mg(2+). The FDX-ACB domain occupies 625-718 (SKYPSIIRDL…IVKQLNLKIR (94 aa)).

It belongs to the phenylalanyl-tRNA synthetase beta subunit family. Type 1 subfamily. Tetramer of two alpha and two beta subunits. Mg(2+) is required as a cofactor.

It is found in the plastid. The protein resides in the chloroplast. It catalyses the reaction tRNA(Phe) + L-phenylalanine + ATP = L-phenylalanyl-tRNA(Phe) + AMP + diphosphate + H(+). In Pyropia yezoensis (Susabi-nori), this protein is Phenylalanine--tRNA ligase beta subunit, chloroplastic.